A 493-amino-acid polypeptide reads, in one-letter code: Arginine decarboxylase (493 aa).

Residue Lys-229 is modified to N6-(pyridoxal phosphate)lysine.

It belongs to the Orn/Lys/Arg decarboxylase class-I family. It depends on pyridoxal 5'-phosphate as a cofactor.

It localises to the cytoplasm. It catalyses the reaction L-arginine + H(+) = agmatine + CO2. Its pathway is amine and polyamine biosynthesis; agmatine biosynthesis; agmatine from L-arginine: step 1/1. Functionally, catalyzes the formation of agmatine from arginine. In Bacillus anthracis, this protein is Arginine decarboxylase (speA).